Here is a 160-residue protein sequence, read N- to C-terminus: Cytochrome b6-f complex subunit 4 (160 aa).

Helical transmembrane passes span 36–56 (LLYL…GLAV), 95–115 (LLGV…PFIE), and 131–151 (LVFI…CLPI).

Belongs to the cytochrome b family. PetD subfamily. As to quaternary structure, the 4 large subunits of the cytochrome b6-f complex are cytochrome b6, subunit IV (17 kDa polypeptide, petD), cytochrome f and the Rieske protein, while the 4 small subunits are petG, petL, petM and petN. The complex functions as a dimer.

Its subcellular location is the plastid. It localises to the chloroplast thylakoid membrane. Functionally, component of the cytochrome b6-f complex, which mediates electron transfer between photosystem II (PSII) and photosystem I (PSI), cyclic electron flow around PSI, and state transitions. The sequence is that of Cytochrome b6-f complex subunit 4 from Thalassiosira pseudonana (Marine diatom).